Here is a 159-residue protein sequence, read N- to C-terminus: Small ribosomal subunit protein uS9 (159 aa).

This sequence belongs to the universal ribosomal protein uS9 family.

The chain is Small ribosomal subunit protein uS9 from Rickettsia rickettsii (strain Iowa).